We begin with the raw amino-acid sequence, 556 residues long: 2-isopropylmalate synthase (556 aa).

Residues 33–307 enclose the Pyruvate carboxyltransferase domain; it reads PIWCSSDLRD…NPGLDFSDID (275 aa). Mg(2+)-binding residues include Asp42, His246, His248, and Asn282. A regulatory domain region spans residues 439 to 556; that stretch reads ANVPYALISH…SLSQTQAKAA (118 aa).

It belongs to the alpha-IPM synthase/homocitrate synthase family. LeuA type 2 subfamily. Homodimer. Mg(2+) is required as a cofactor.

The protein resides in the cytoplasm. The catalysed reaction is 3-methyl-2-oxobutanoate + acetyl-CoA + H2O = (2S)-2-isopropylmalate + CoA + H(+). The protein operates within amino-acid biosynthesis; L-leucine biosynthesis; L-leucine from 3-methyl-2-oxobutanoate: step 1/4. In terms of biological role, catalyzes the condensation of the acetyl group of acetyl-CoA with 3-methyl-2-oxobutanoate (2-ketoisovalerate) to form 3-carboxy-3-hydroxy-4-methylpentanoate (2-isopropylmalate). In Pseudomonas syringae pv. syringae (strain B728a), this protein is 2-isopropylmalate synthase.